We begin with the raw amino-acid sequence, 410 residues long: Argininosuccinate synthase (410 aa).

ATP contacts are provided by residues A13–S21 and A40. Y91 and S96 together coordinate L-citrulline. G121 serves as a coordination point for ATP. 3 residues coordinate L-aspartate: T123, N127, and D128. N127 is an L-citrulline binding site. 5 residues coordinate L-citrulline: R131, S182, S191, E267, and Y279.

This sequence belongs to the argininosuccinate synthase family. Type 1 subfamily. Homotetramer.

The protein localises to the cytoplasm. It catalyses the reaction L-citrulline + L-aspartate + ATP = 2-(N(omega)-L-arginino)succinate + AMP + diphosphate + H(+). It functions in the pathway amino-acid biosynthesis; L-arginine biosynthesis; L-arginine from L-ornithine and carbamoyl phosphate: step 2/3. The protein is Argininosuccinate synthase of Maricaulis maris (strain MCS10) (Caulobacter maris).